Here is a 395-residue protein sequence, read N- to C-terminus: RNA demethylase ALKBH5 (395 aa).

2 disordered regions span residues M1–R28 and A47–A83. An N-acetylalanine modification is found at A2. Residue K58 forms a Glycyl lysine isopeptide (Lys-Gly) (interchain with G-Cter in ubiquitin) linkage. Over residues K60 to A83 the composition is skewed to basic and acidic residues. Residues S65 and S70 each carry the phosphoserine modification. Residues E68–K117 are a coiled coil. Y72 is subject to Phosphotyrosine. K87 participates in a covalent cross-link: Glycyl lysine isopeptide (Lys-Gly) (interchain with G-Cter in SUMO1). Phosphoserine is present on S88. K133 is modified (N6-acetyllysine). Residue Y140 is part of the active site. Residues N194, Y196, and H205 each coordinate 2-oxoglutarate. Residues C231 and C268 are joined by a disulfide bond. An N6-acetyllysine modification is found at K236. The 2-oxoglutarate site is built by H267 and R278. The interval E294–H395 is disordered. A compositionally biased stretch (low complexity) spans K296–S306. A Glycyl lysine isopeptide (Lys-Gly) (interchain with G-Cter in SUMO1) cross-link involves residue K322. At S326 the chain carries Phosphoserine. K329 is covalently cross-linked (Glycyl lysine isopeptide (Lys-Gly) (interchain with G-Cter in SUMO2)). Residues K329–R350 show a composition bias toward basic and acidic residues. R360 carries the post-translational modification Omega-N-methylarginine. A phosphoserine mark is found at S362, S372, S375, and S385.

Belongs to the alkB family. In terms of assembly, monomer. Interacts with RBM33; promoting desumoylation by SENP1 and recruitment to N(6)-methyladenosine-containing mRNAs. Interacts (when acetylated by KAT8) with PSPC1; interaction facilitates recognition of N(6)-methyladenosine (m6A) mRNA. Requires Fe(2+) as cofactor. Phosphorylated at Ser-88 and Ser-326 in response to reactive oxygen species (ROS), promoting sumoylation and inactivation. Post-translationally, acetylated by KAT8 at Lys-236, promoting interaction with PSPC1, thereby facilitating recognition of N(6)-methyladenosine (m6A) mRNA by ALKBH5. Deacetylated at Lys-236 by HDAC7. In terms of processing, sumoylated at Lys-87 and Lys-322 by PIAS4 following phosphorylation at Ser-88 and Ser-326 in response to reactive oxygen species (ROS), inhibiting the RNA demethylase activity. Desumoylated by SENP1; relieving RNA demethylase inhibition, leading to N(6)-methyladenosine-containing mRNAs demethylation. Ubiquitinated at Lys-58 via 'Lys-48'-linked polyubiquitin chain, leading to its degradation by the proteasome. Deubiquitinated at Lys-58 by USP9X, promoting its stabilizazion.

The protein localises to the nucleus speckle. It catalyses the reaction an N(6)-methyladenosine in mRNA + 2-oxoglutarate + O2 = an adenosine in mRNA + formaldehyde + succinate + CO2. Its activity is regulated as follows. RNA demethylase activity is inhibited following sumoylation. Inhibition is relieved following desumoylation. Functionally, dioxygenase that specifically demethylates N(6)-methyladenosine (m6A) RNA, the most prevalent internal modification of messenger RNA (mRNA) in higher eukaryotes. Demethylates RNA by oxidative demethylation, which requires molecular oxygen, alpha-ketoglutarate and iron. Demethylation of m6A mRNA affects mRNA processing, translation and export. Can also demethylate N(6)-methyladenosine in single-stranded DNA (in vitro). Required for the late meiotic and haploid phases of spermatogenesis by mediating m6A demethylation in spermatocytes and round spermatids: m6A demethylation of target transcripts is required for correct splicing and the production of longer 3'-UTR mRNAs in male germ cells. Involved in paraspeckle assembly, a nuclear membraneless organelle, by undergoing liquid-liquid phase separation. Paraspeckle assembly is coupled with m6A demethylation of RNAs, such as NEAT1 non-coding RNA. Also acts as a negative regulator of T-cell development: inhibits gamma-delta T-cell proliferation via demethylation of JAG1 and NOTCH2 transcripts. Inhibits regulatory T-cell (Treg) recruitment by mediating demethylation and destabilization of CCL28 mRNAs. This Rattus norvegicus (Rat) protein is RNA demethylase ALKBH5 (Alkbh5).